The following is a 505-amino-acid chain: ATP synthase subunit alpha, chloroplastic (505 aa).

170 to 177 (GDRQTGKT) lines the ATP pocket.

Belongs to the ATPase alpha/beta chains family. F-type ATPases have 2 components, CF(1) - the catalytic core - and CF(0) - the membrane proton channel. CF(1) has five subunits: alpha(3), beta(3), gamma(1), delta(1), epsilon(1). CF(0) has four main subunits: a, b, b' and c.

It is found in the plastid. It localises to the chloroplast thylakoid membrane. The enzyme catalyses ATP + H2O + 4 H(+)(in) = ADP + phosphate + 5 H(+)(out). Functionally, produces ATP from ADP in the presence of a proton gradient across the membrane. The alpha chain is a regulatory subunit. The sequence is that of ATP synthase subunit alpha, chloroplastic from Oenothera parviflora (Small-flowered evening primrose).